A 1374-amino-acid polypeptide reads, in one-letter code: DNA-directed RNA polymerase subunit beta (1374 aa).

Belongs to the RNA polymerase beta chain family. The RNAP catalytic core consists of 2 alpha, 1 beta, 1 beta' and 1 omega subunit. When a sigma factor is associated with the core the holoenzyme is formed, which can initiate transcription.

It catalyses the reaction RNA(n) + a ribonucleoside 5'-triphosphate = RNA(n+1) + diphosphate. DNA-dependent RNA polymerase catalyzes the transcription of DNA into RNA using the four ribonucleoside triphosphates as substrates. The protein is DNA-directed RNA polymerase subunit beta of Rhodopseudomonas palustris (strain TIE-1).